Consider the following 84-residue polypeptide: Small ribosomal subunit protein uS17c (84 aa).

This sequence belongs to the universal ribosomal protein uS17 family. As to quaternary structure, part of the 30S ribosomal subunit.

The protein resides in the plastid. The protein localises to the chloroplast. In terms of biological role, one of the primary rRNA binding proteins, it binds specifically to the 5'-end of 16S ribosomal RNA. This chain is Small ribosomal subunit protein uS17c (rps17), found in Phaeodactylum tricornutum (strain CCAP 1055/1).